Here is a 157-residue protein sequence, read N- to C-terminus: 6,7-dimethyl-8-ribityllumazine synthase (157 aa).

5-amino-6-(D-ribitylamino)uracil is bound by residues Phe22, 56 to 58 (AFE), and 81 to 83 (VLI). 86 to 87 (ET) contributes to the (2S)-2-hydroxy-3-oxobutyl phosphate binding site. His89 acts as the Proton donor in catalysis. Phe114 is a 5-amino-6-(D-ribitylamino)uracil binding site. (2S)-2-hydroxy-3-oxobutyl phosphate is bound at residue Arg128.

Belongs to the DMRL synthase family.

The enzyme catalyses (2S)-2-hydroxy-3-oxobutyl phosphate + 5-amino-6-(D-ribitylamino)uracil = 6,7-dimethyl-8-(1-D-ribityl)lumazine + phosphate + 2 H2O + H(+). Its pathway is cofactor biosynthesis; riboflavin biosynthesis; riboflavin from 2-hydroxy-3-oxobutyl phosphate and 5-amino-6-(D-ribitylamino)uracil: step 1/2. Functionally, catalyzes the formation of 6,7-dimethyl-8-ribityllumazine by condensation of 5-amino-6-(D-ribitylamino)uracil with 3,4-dihydroxy-2-butanone 4-phosphate. This is the penultimate step in the biosynthesis of riboflavin. The sequence is that of 6,7-dimethyl-8-ribityllumazine synthase from Chlamydia trachomatis serovar L2 (strain ATCC VR-902B / DSM 19102 / 434/Bu).